Reading from the N-terminus, the 558-residue chain is Dihydroxy-acid dehydratase (558 aa).

D81 serves as a coordination point for Mg(2+). C122 is a binding site for [2Fe-2S] cluster. The Mg(2+) site is built by D123 and K124. At K124 the chain carries N6-carboxylysine. C195 contacts [2Fe-2S] cluster. E447 serves as a coordination point for Mg(2+). The active-site Proton acceptor is the S473.

The protein belongs to the IlvD/Edd family. Homodimer. The cofactor is [2Fe-2S] cluster. Mg(2+) is required as a cofactor.

The enzyme catalyses (2R)-2,3-dihydroxy-3-methylbutanoate = 3-methyl-2-oxobutanoate + H2O. The catalysed reaction is (2R,3R)-2,3-dihydroxy-3-methylpentanoate = (S)-3-methyl-2-oxopentanoate + H2O. Its pathway is amino-acid biosynthesis; L-isoleucine biosynthesis; L-isoleucine from 2-oxobutanoate: step 3/4. It participates in amino-acid biosynthesis; L-valine biosynthesis; L-valine from pyruvate: step 3/4. Functions in the biosynthesis of branched-chain amino acids. Catalyzes the dehydration of (2R,3R)-2,3-dihydroxy-3-methylpentanoate (2,3-dihydroxy-3-methylvalerate) into 2-oxo-3-methylpentanoate (2-oxo-3-methylvalerate) and of (2R)-2,3-dihydroxy-3-methylbutanoate (2,3-dihydroxyisovalerate) into 2-oxo-3-methylbutanoate (2-oxoisovalerate), the penultimate precursor to L-isoleucine and L-valine, respectively. The polypeptide is Dihydroxy-acid dehydratase (Bacillus velezensis (strain DSM 23117 / BGSC 10A6 / LMG 26770 / FZB42) (Bacillus amyloliquefaciens subsp. plantarum)).